The primary structure comprises 129 residues: Glycine cleavage system H protein (129 aa).

The region spanning Thr24 to Lys106 is the Lipoyl-binding domain. An N6-lipoyllysine modification is found at Lys65.

The protein belongs to the GcvH family. In terms of assembly, the glycine cleavage system is composed of four proteins: P, T, L and H. Requires (R)-lipoate as cofactor.

In terms of biological role, the glycine cleavage system catalyzes the degradation of glycine. The H protein shuttles the methylamine group of glycine from the P protein to the T protein. This chain is Glycine cleavage system H protein, found in Escherichia coli O127:H6 (strain E2348/69 / EPEC).